A 644-amino-acid polypeptide reads, in one-letter code: DNA gyrase subunit B (644 aa).

In terms of domain architecture, Toprim spans 429–543 (CEIFLVEGDS…AGYVYIAQPP (115 aa)). Mg(2+)-binding residues include Glu-435, Asp-508, and Asp-510.

This sequence belongs to the type II topoisomerase GyrB family. Heterotetramer, composed of two GyrA and two GyrB chains. In the heterotetramer, GyrA contains the active site tyrosine that forms a transient covalent intermediate with DNA, while GyrB binds cofactors and catalyzes ATP hydrolysis. It depends on Mg(2+) as a cofactor. Requires Mn(2+) as cofactor. The cofactor is Ca(2+).

Its subcellular location is the cytoplasm. It catalyses the reaction ATP-dependent breakage, passage and rejoining of double-stranded DNA.. Its function is as follows. A type II topoisomerase that negatively supercoils closed circular double-stranded (ds) DNA in an ATP-dependent manner to modulate DNA topology and maintain chromosomes in an underwound state. Negative supercoiling favors strand separation, and DNA replication, transcription, recombination and repair, all of which involve strand separation. Also able to catalyze the interconversion of other topological isomers of dsDNA rings, including catenanes and knotted rings. Type II topoisomerases break and join 2 DNA strands simultaneously in an ATP-dependent manner. This Staphylococcus aureus (strain USA300) protein is DNA gyrase subunit B.